A 429-amino-acid chain; its full sequence is UDP-N-acetylglucosamine 1-carboxyvinyltransferase (429 aa).

22–23 (KN) is a phosphoenolpyruvate binding site. R102 contacts UDP-N-acetyl-alpha-D-glucosamine. Residue C126 is the Proton donor of the active site. The residue at position 126 (C126) is a 2-(S-cysteinyl)pyruvic acid O-phosphothioketal. UDP-N-acetyl-alpha-D-glucosamine-binding positions include 131–135 (RPVDL), D316, and I338.

It belongs to the EPSP synthase family. MurA subfamily.

Its subcellular location is the cytoplasm. It carries out the reaction phosphoenolpyruvate + UDP-N-acetyl-alpha-D-glucosamine = UDP-N-acetyl-3-O-(1-carboxyvinyl)-alpha-D-glucosamine + phosphate. It functions in the pathway cell wall biogenesis; peptidoglycan biosynthesis. In terms of biological role, cell wall formation. Adds enolpyruvyl to UDP-N-acetylglucosamine. The polypeptide is UDP-N-acetylglucosamine 1-carboxyvinyltransferase (Rhodopseudomonas palustris (strain BisB5)).